Here is a 165-residue protein sequence, read N- to C-terminus: Small ribosomal subunit protein uS5 (165 aa).

The 64-residue stretch at 10–73 (LKEKVVFINR…EDAKKHLVEV (64 aa)) folds into the S5 DRBM domain.

It belongs to the universal ribosomal protein uS5 family. As to quaternary structure, part of the 30S ribosomal subunit. Contacts proteins S4 and S8.

With S4 and S12 plays an important role in translational accuracy. Its function is as follows. Located at the back of the 30S subunit body where it stabilizes the conformation of the head with respect to the body. This is Small ribosomal subunit protein uS5 from Clostridium novyi (strain NT).